The primary structure comprises 223 residues: Adenylate kinase 4, mitochondrial (223 aa).

15 to 20 (GSGKGT) contributes to the a ribonucleoside 5'-triphosphate binding site. The tract at residues 35-64 (SSGHLLRENLKTNTEVGDVAKQYLEKGLLV) is NMP. Residues S36 and R41 each coordinate AMP. Position 60 is an N6-succinyllysine (K60). Residues 62-64 (LLV), 89-92 (GFPR), and Q96 contribute to the AMP site. The LID stretch occupies residues 125–162 (RRWIHPSSGRVYNLDFNPPQVLGVDDITGEPLVQQEDD). A ribonucleoside 5'-triphosphate-binding positions include R126 and 135 to 136 (VY). AMP is bound at residue R170. The residue at position 175 (K175) is an N6-acetyllysine. An N6-acetyllysine; alternate mark is found at K179 and K186. N6-succinyllysine; alternate occurs at positions 179 and 186. T199 contributes to the a ribonucleoside 5'-triphosphate binding site.

The protein belongs to the adenylate kinase family. AK3 subfamily. As to quaternary structure, monomer. Interacts with SLC25A5/ANT2. As to expression, expressed in the pyramidal cells in the hippocampus.

The protein resides in the mitochondrion matrix. The enzyme catalyses a ribonucleoside 5'-phosphate + ATP = a ribonucleoside 5'-diphosphate + ADP. It carries out the reaction AMP + ATP = 2 ADP. It catalyses the reaction GTP + AMP = GDP + ADP. The catalysed reaction is CMP + ATP = CDP + ADP. The enzyme catalyses GTP + CMP = CDP + GDP. It carries out the reaction dAMP + ATP = dADP + ADP. It catalyses the reaction dCMP + ATP = dCDP + ADP. The catalysed reaction is a 2'-deoxyribonucleoside 5'-diphosphate + ATP = a 2'-deoxyribonucleoside 5'-triphosphate + ADP. The enzyme catalyses a ribonucleoside 5'-diphosphate + ATP = a ribonucleoside 5'-triphosphate + ADP. It carries out the reaction GDP + ATP = GTP + ADP. It catalyses the reaction CDP + GTP = CTP + GDP. The catalysed reaction is CDP + ATP = CTP + ADP. The enzyme catalyses UDP + ATP = UTP + ADP. It carries out the reaction GTP + UDP = UTP + GDP. It catalyses the reaction dADP + GTP = dATP + GDP. The catalysed reaction is dCDP + GTP = dCTP + GDP. The enzyme catalyses dCDP + ATP = dCTP + ADP. It carries out the reaction dGDP + ATP = dGTP + ADP. It catalyses the reaction dTDP + GTP = dTTP + GDP. The catalysed reaction is dTDP + ATP = dTTP + ADP. Its function is as follows. Broad-specificity mitochondrial nucleoside phosphate kinase involved in cellular nucleotide homeostasis by catalyzing nucleoside-phosphate interconversions. Similar to other adenylate kinases, preferentially catalyzes the phosphorylation of the nucleoside monophosphate AMP with ATP as phosphate donor to produce ADP. Phosphorylates only AMP when using GTP as phosphate donor. In vitro, can also catalyze the phosphorylation of CMP, dAMP and dCMP and use GTP as an alternate phosphate donor. Moreover, exhibits a diphosphate kinase activity, producing ATP, CTP, GTP, UTP, TTP, dATP, dCTP and dGTP from the corresponding diphosphate substrates with either ATP or GTP as phosphate donors. Plays a role in controlling cellular ATP levels by regulating phosphorylation and activation of the energy sensor protein kinase AMPK. Plays a protective role in the cellular response to oxidative stress. The sequence is that of Adenylate kinase 4, mitochondrial from Rattus norvegicus (Rat).